A 332-amino-acid chain; its full sequence is Geranylgeranyl diphosphate synthase (332 aa).

Residues K45, R48, and H77 each coordinate isopentenyl diphosphate. D84 and D88 together coordinate Mg(2+). An all-trans-polyprenyl diphosphate is bound at residue R93. R94 lines the isopentenyl diphosphate pocket. Positions 177, 178, 215, 232, and 242 each coordinate an all-trans-polyprenyl diphosphate.

It belongs to the FPP/GGPP synthase family. It depends on Mg(2+) as a cofactor.

It catalyses the reaction isopentenyl diphosphate + (2E,6E)-farnesyl diphosphate = (2E,6E,10E)-geranylgeranyl diphosphate + diphosphate. It participates in isoprenoid biosynthesis; geranylgeranyl diphosphate biosynthesis; geranylgeranyl diphosphate from farnesyl diphosphate and isopentenyl diphosphate: step 1/1. In terms of biological role, catalyzes the condensation of isopentenyl pyrophosphate with the allylic pyrophosphates to yield geranylgeranyl diphosphate (GGPP) which is a precursor of the ether-linked lipids. This Saccharolobus solfataricus (strain ATCC 35092 / DSM 1617 / JCM 11322 / P2) (Sulfolobus solfataricus) protein is Geranylgeranyl diphosphate synthase (gds).